The chain runs to 592 residues: A-type ATP synthase subunit A (592 aa).

Residue 236–243 (GPFGSGKT) participates in ATP binding.

Belongs to the ATPase alpha/beta chains family. In terms of assembly, has multiple subunits with at least A(3), B(3), C, D, E, F, H, I and proteolipid K(x).

It is found in the cell membrane. The enzyme catalyses ATP + H2O + 4 H(+)(in) = ADP + phosphate + 5 H(+)(out). In terms of biological role, component of the A-type ATP synthase that produces ATP from ADP in the presence of a proton gradient across the membrane. The A chain is the catalytic subunit. In Methanopyrus kandleri (strain AV19 / DSM 6324 / JCM 9639 / NBRC 100938), this protein is A-type ATP synthase subunit A.